Reading from the N-terminus, the 252-residue chain is 1-(5-phosphoribosyl)-5-[(5-phosphoribosylamino)methylideneamino] imidazole-4-carboxamide isomerase (252 aa).

D10 functions as the Proton acceptor in the catalytic mechanism. D129 serves as the catalytic Proton donor.

The protein belongs to the HisA/HisF family.

It localises to the cytoplasm. It catalyses the reaction 1-(5-phospho-beta-D-ribosyl)-5-[(5-phospho-beta-D-ribosylamino)methylideneamino]imidazole-4-carboxamide = 5-[(5-phospho-1-deoxy-D-ribulos-1-ylimino)methylamino]-1-(5-phospho-beta-D-ribosyl)imidazole-4-carboxamide. It functions in the pathway amino-acid biosynthesis; L-histidine biosynthesis; L-histidine from 5-phospho-alpha-D-ribose 1-diphosphate: step 4/9. The sequence is that of 1-(5-phosphoribosyl)-5-[(5-phosphoribosylamino)methylideneamino] imidazole-4-carboxamide isomerase from Frankia casuarinae (strain DSM 45818 / CECT 9043 / HFP020203 / CcI3).